The following is a 110-amino-acid chain: UPF0060 membrane protein Francci3_2786 (110 aa).

The next 4 helical transmembrane spans lie at 8–28 (LLFV…WQGV), 33–53 (GPVW…VATL), 62–82 (ILAA…VAVD), and 87–107 (DRYD…IMYA).

The protein belongs to the UPF0060 family.

It is found in the cell membrane. The sequence is that of UPF0060 membrane protein Francci3_2786 from Frankia casuarinae (strain DSM 45818 / CECT 9043 / HFP020203 / CcI3).